Here is a 219-residue protein sequence, read N- to C-terminus: Phosphatidylserine decarboxylase proenzyme (219 aa).

Serine 188 acts as the Schiff-base intermediate with substrate; via pyruvic acid in catalysis. The residue at position 188 (serine 188) is a Pyruvic acid (Ser); by autocatalysis.

Belongs to the phosphatidylserine decarboxylase family. PSD-A subfamily. In terms of assembly, heterodimer of a large membrane-associated beta subunit and a small pyruvoyl-containing alpha subunit. Pyruvate serves as cofactor. Post-translationally, is synthesized initially as an inactive proenzyme. Formation of the active enzyme involves a self-maturation process in which the active site pyruvoyl group is generated from an internal serine residue via an autocatalytic post-translational modification. Two non-identical subunits are generated from the proenzyme in this reaction, and the pyruvate is formed at the N-terminus of the alpha chain, which is derived from the carboxyl end of the proenzyme. The post-translation cleavage follows an unusual pathway, termed non-hydrolytic serinolysis, in which the side chain hydroxyl group of the serine supplies its oxygen atom to form the C-terminus of the beta chain, while the remainder of the serine residue undergoes an oxidative deamination to produce ammonia and the pyruvoyl prosthetic group on the alpha chain.

It localises to the cell membrane. It catalyses the reaction a 1,2-diacyl-sn-glycero-3-phospho-L-serine + H(+) = a 1,2-diacyl-sn-glycero-3-phosphoethanolamine + CO2. The protein operates within phospholipid metabolism; phosphatidylethanolamine biosynthesis; phosphatidylethanolamine from CDP-diacylglycerol: step 2/2. Functionally, catalyzes the formation of phosphatidylethanolamine (PtdEtn) from phosphatidylserine (PtdSer). This is Phosphatidylserine decarboxylase proenzyme from Citrifermentans bemidjiense (strain ATCC BAA-1014 / DSM 16622 / JCM 12645 / Bem) (Geobacter bemidjiensis).